The primary structure comprises 567 residues: Formate--tetrahydrofolate ligase (567 aa).

76 to 83 contacts ATP; that stretch reads TPAGEGKT.

It belongs to the formate--tetrahydrofolate ligase family.

The catalysed reaction is (6S)-5,6,7,8-tetrahydrofolate + formate + ATP = (6R)-10-formyltetrahydrofolate + ADP + phosphate. Its pathway is one-carbon metabolism; tetrahydrofolate interconversion. The chain is Formate--tetrahydrofolate ligase from Sinorhizobium medicae (strain WSM419) (Ensifer medicae).